Here is a 141-residue protein sequence, read N- to C-terminus: Nucleoside diphosphate kinase (141 aa).

ATP contacts are provided by Lys11, Phe59, Arg87, Thr93, Arg104, and Asn114. The active-site Pros-phosphohistidine intermediate is the His117.

The protein belongs to the NDK family. As to quaternary structure, homotetramer. The cofactor is Mg(2+).

The protein resides in the cytoplasm. The catalysed reaction is a 2'-deoxyribonucleoside 5'-diphosphate + ATP = a 2'-deoxyribonucleoside 5'-triphosphate + ADP. It carries out the reaction a ribonucleoside 5'-diphosphate + ATP = a ribonucleoside 5'-triphosphate + ADP. In terms of biological role, major role in the synthesis of nucleoside triphosphates other than ATP. The ATP gamma phosphate is transferred to the NDP beta phosphate via a ping-pong mechanism, using a phosphorylated active-site intermediate. This Acidovorax ebreus (strain TPSY) (Diaphorobacter sp. (strain TPSY)) protein is Nucleoside diphosphate kinase.